We begin with the raw amino-acid sequence, 722 residues long: DUF724 domain-containing protein 7 (722 aa).

The segment at 424-449 (KTTPKKKLQAMKNQKSSTNDSVGEKV) is disordered. A compositionally biased stretch (polar residues) spans 434 to 444 (MKNQKSSTNDS). The DUF724 domain maps to 540 to 720 (VLPFVKKSQL…HEFQAILAAP (181 aa)). Positions 645–712 (CALEELKAVE…DQEVQNVDHE (68 aa)) form a coiled coil.

Homodimer. Interacts wtih ABAP1, ARIA and LHP1. Interacts with the non-modified histones H1, H2B, H3 and H4. Expressed in roots, leaves, stems and flowers.

The protein localises to the nucleus. Its function is as follows. May act as a link between DNA replication, transcription and chromatin remodeling during flower development. May participate in the repression of LHP1-targeted genes during flower development by direct interaction with LHP1. May be involved in the polar growth of plant cells via transportation of RNAs. The chain is DUF724 domain-containing protein 7 from Arabidopsis thaliana (Mouse-ear cress).